A 554-amino-acid chain; its full sequence is Valerianol synthase TPS1G (554 aa).

Residues Asp307 and Asp311 each contribute to the Mg(2+) site. Residues 326–330 (VQRWD) carry the DDXXD motif motif. The Mg(2+) site is built by Asp452, Ser456, and Glu460.

The protein belongs to the terpene synthase family. Mg(2+) serves as cofactor.

The enzyme catalyses (2E,6E)-farnesyl diphosphate + H2O = valerianol + diphosphate. It participates in secondary metabolite biosynthesis; terpenoid biosynthesis. In terms of biological role, terpene synthase that catalyzes the biosynthesis of the terpene valerianol, which is a volatile compound of floral scent. This Camellia hiemalis (Camellia) protein is Valerianol synthase TPS1G.